The primary structure comprises 325 residues: 2-dehydro-3-deoxygluconokinase (325 aa).

Substrate is bound by residues 49–53 (GSEAN), tyrosine 105, 121–123 (YYR), and arginine 181. ATP-binding positions include 179-181 (NIR), 240-245 (KLGAEG), and 269-272 (GAGD). Residues aspartate 272 and aspartate 308 each coordinate substrate. The active-site Proton acceptor is the aspartate 272.

This sequence belongs to the carbohydrate kinase PfkB family. Homohexamer; trimer of dimers.

It carries out the reaction 2-dehydro-3-deoxy-D-gluconate + ATP = 2-dehydro-3-deoxy-6-phospho-D-gluconate + ADP + H(+). It functions in the pathway carbohydrate acid metabolism; 2-dehydro-3-deoxy-D-gluconate degradation; D-glyceraldehyde 3-phosphate and pyruvate from 2-dehydro-3-deoxy-D-gluconate: step 1/2. In terms of biological role, involved in the degradation of glucose via the semi-phosphorylative Entner-Doudoroff pathway. Catalyzes the phosphorylation of 2-keto-3-deoxygluconate (KDG) yielding 2-keto-3-deoxy-6-phosphogluconate (KDPG). The polypeptide is 2-dehydro-3-deoxygluconokinase (kdgK) (Thermoproteus tenax).